A 91-amino-acid polypeptide reads, in one-letter code: Small ribosomal subunit protein bS18 (91 aa).

The tract at residues 1-21 is disordered; it reads MSDERTPQRSSGPRKKRPFQR. The span at 12–21 shows a compositional bias: basic residues; that stretch reads GPRKKRPFQR.

The protein belongs to the bacterial ribosomal protein bS18 family. As to quaternary structure, part of the 30S ribosomal subunit. Forms a tight heterodimer with protein bS6.

In terms of biological role, binds as a heterodimer with protein bS6 to the central domain of the 16S rRNA, where it helps stabilize the platform of the 30S subunit. The protein is Small ribosomal subunit protein bS18 of Geotalea uraniireducens (strain Rf4) (Geobacter uraniireducens).